Reading from the N-terminus, the 428-residue chain is Enolase 2 (428 aa).

Gln162 provides a ligand contact to (2R)-2-phosphoglycerate. The active-site Proton donor is the Glu204. Asp241, Glu285, and Asp312 together coordinate Mg(2+). (2R)-2-phosphoglycerate contacts are provided by Lys337, Arg366, Ser367, and Lys388. Lys337 acts as the Proton acceptor in catalysis.

The protein belongs to the enolase family. Mg(2+) serves as cofactor.

It is found in the cytoplasm. The protein localises to the secreted. The protein resides in the cell surface. It catalyses the reaction (2R)-2-phosphoglycerate = phosphoenolpyruvate + H2O. It functions in the pathway carbohydrate degradation; glycolysis; pyruvate from D-glyceraldehyde 3-phosphate: step 4/5. Its function is as follows. Catalyzes the reversible conversion of 2-phosphoglycerate (2-PG) into phosphoenolpyruvate (PEP). It is essential for the degradation of carbohydrates via glycolysis. This chain is Enolase 2, found in Lactobacillus johnsonii (strain CNCM I-12250 / La1 / NCC 533).